The chain runs to 519 residues: Pleckstrin homology domain-containing family A member 8 (519 aa).

Positions 1–93 (MEGVLYKWTN…WLVALGSAKA (93 aa)) constitute a PH domain. Position 139 is a phosphothreonine (Thr139). Residue Ser145 is modified to Phosphoserine. Thr153 is modified (phosphothreonine). The tract at residues 310 to 519 (TFFSTMNTSF…VHGLESDEVV (210 aa)) is glycolipid transfer protein homology domain.

In terms of assembly, homodimer. Interacts with ARF1; the interaction together with phosphatidylinositol 4-phosphate binding is required for FAPP2 GlcCer transfer ability. As to expression, expressed in kidney cell lines.

The protein localises to the golgi apparatus. It is found in the trans-Golgi network membrane. The protein resides in the membrane. Functionally, cargo transport protein that is required for apical transport from the Golgi complex. Transports AQP2 from the trans-Golgi network (TGN) to sites of AQP2 phosphorylation. Mediates the non-vesicular transport of glucosylceramide (GlcCer) from the trans-Golgi network (TGN) to the plasma membrane and plays a pivotal role in the synthesis of complex glycosphingolipids. Binding of both phosphatidylinositol 4-phosphate (PIP) and ARF1 are essential for the GlcCer transfer ability. Also required for primary cilium formation, possibly by being involved in the transport of raft lipids to the apical membrane, and for membrane tubulation. In Homo sapiens (Human), this protein is Pleckstrin homology domain-containing family A member 8 (PLEKHA8).